Consider the following 1020-residue polypeptide: Calcium-transporting ATPase 1 (1020 aa).

Methionine 1 carries the N-acetylmethionine modification. Residues 1–162 (MESYLNENFG…NQFTESPSRG (162 aa)) lie on the Stromal side of the membrane. The segment at 21–32 (ALQRWRKLCWIV) is interaction with calmodulin. Serine 46 bears the Phosphoserine; by CPK mark. The helical transmembrane segment at 163 to 183 (FWLFVWEALQDTTLMILAACA) threads the bilayer. The Lumenal portion of the chain corresponds to 184 to 201 (FVSLIVGILMEGWPIGAH). The chain crosses the membrane as a helical span at residues 202–222 (DGLGIVASILLVVFVTATSDY). Residues 223–350 (RQSLQFKDLD…DDETPLQVKL (128 aa)) lie on the Stromal side of the membrane. A helical transmembrane segment spans residues 351–370 (NGVATIIGKIGLFFAVITFA). Topologically, residues 371-400 (VLVQGLANQKRLDNSHWIWTADELMAMLEY) are lumenal. A helical transmembrane segment spans residues 401-418 (FAVAVTIVVVAVPEGLPL). Topologically, residues 419-813 (AVTLSLAFAM…KWGRSVYINI (395 aa)) are stromal. Aspartate 456 functions as the 4-aspartylphosphate intermediate in the catalytic mechanism. Residues aspartate 758 and aspartate 762 each coordinate Mg(2+). Residues 814-832 (QKFVQFQLTVNVVALIVNF) form a helical membrane-spanning segment. Residues 833–843 (LSACLTGNAPL) are Lumenal-facing. The chain crosses the membrane as a helical span at residues 844–864 (TAVQLLWVNMIMDTLGALALA). Over 865–884 (TEPPQDDLMKRSPVGRKGNF) the chain is Stromal. A helical transmembrane segment spans residues 885 to 907 (ISNVMWRNILGQSLYQLVIIWCL). At 908–919 (QTKGKTMFGLDG) the chain is on the lumenal side. Residues 920–941 (PDSDLTLNTLIFNIFVFCQVFN) traverse the membrane as a helical segment. Topologically, residues 942 to 959 (EISSREMEKIDVFKGILK) are stromal. The helical transmembrane segment at 960–981 (NYVFVAVLTCTVVFQVIIIELL) threads the bilayer. Over 982-991 (GTFADTTPLN) the chain is Lumenal. Residues 992–1013 (LGQWLVSIILGFLGMPVAAALK) form a helical membrane-spanning segment. The Stromal portion of the chain corresponds to 1014–1020 (MIPVGSH).

Belongs to the cation transport ATPase (P-type) (TC 3.A.3) family. Type IIB subfamily. In terms of tissue distribution, expressed at higher levels in roots than in leaves.

Its subcellular location is the plastid. The protein localises to the chloroplast inner membrane. The enzyme catalyses Ca(2+)(in) + ATP + H2O = Ca(2+)(out) + ADP + phosphate + H(+). Activated by calmodulin. Functionally, this magnesium-dependent enzyme catalyzes the hydrolysis of ATP coupled with the translocation of calcium from the cytosol out of the cell or into organelles. This is Calcium-transporting ATPase 1 (ACA1) from Arabidopsis thaliana (Mouse-ear cress).